The following is a 212-amino-acid chain: Urease accessory protein UreG (212 aa).

Position 15 to 22 (15 to 22) interacts with GTP; sequence GPVGSGKT.

Belongs to the SIMIBI class G3E GTPase family. UreG subfamily. In terms of assembly, homodimer. UreD, UreF and UreG form a complex that acts as a GTP-hydrolysis-dependent molecular chaperone, activating the urease apoprotein by helping to assemble the nickel containing metallocenter of UreC. The UreE protein probably delivers the nickel.

The protein resides in the cytoplasm. In terms of biological role, facilitates the functional incorporation of the urease nickel metallocenter. This process requires GTP hydrolysis, probably effectuated by UreG. This Opitutus terrae (strain DSM 11246 / JCM 15787 / PB90-1) protein is Urease accessory protein UreG.